A 130-amino-acid polypeptide reads, in one-letter code: Small ribosomal subunit protein bS6 (130 aa).

The tract at residues 99–130 is disordered; it reads ASPMVKAKDERRERHDFASEANDDSEAGDSEE. Residues 104–116 are compositionally biased toward basic and acidic residues; sequence KAKDERRERHDFA. The span at 119 to 130 shows a compositional bias: acidic residues; sequence ANDDSEAGDSEE.

This sequence belongs to the bacterial ribosomal protein bS6 family.

Its function is as follows. Binds together with bS18 to 16S ribosomal RNA. In Yersinia enterocolitica serotype O:8 / biotype 1B (strain NCTC 13174 / 8081), this protein is Small ribosomal subunit protein bS6.